The following is a 129-amino-acid chain: Aspartate 1-decarboxylase (129 aa).

Residue Ser-25 is the Schiff-base intermediate with substrate; via pyruvic acid of the active site. Position 25 is a pyruvic acid (Ser) (Ser-25). Thr-57 lines the substrate pocket. Tyr-58 serves as the catalytic Proton donor. Gly-73–Ala-75 provides a ligand contact to substrate.

This sequence belongs to the PanD family. Heterooctamer of four alpha and four beta subunits. The cofactor is pyruvate. In terms of processing, is synthesized initially as an inactive proenzyme, which is activated by self-cleavage at a specific serine bond to produce a beta-subunit with a hydroxyl group at its C-terminus and an alpha-subunit with a pyruvoyl group at its N-terminus.

It is found in the cytoplasm. It catalyses the reaction L-aspartate + H(+) = beta-alanine + CO2. It participates in cofactor biosynthesis; (R)-pantothenate biosynthesis; beta-alanine from L-aspartate: step 1/1. Functionally, catalyzes the pyruvoyl-dependent decarboxylation of aspartate to produce beta-alanine. The chain is Aspartate 1-decarboxylase from Chlorobium chlorochromatii (strain CaD3).